The chain runs to 559 residues: MRRKIMYNPRKYSSQVVDGFERAPSRAMLYPVGFTKEDFNKPQVGIASTWSMVTPCNMHINKLADETLKGVNATGGKAIIFNTITISDGISMGSEGMKYSLVSREVIADSIETVVGCQGFDGVVAIGGCDKNMPGCIIGLVRLNRPSIFVYGGTIQPGKNHTDVVSVFEAVGQFANHTIDAIELENIEKIAIPGPGSCGGMYTANTMASAIEALGMSLPNSSAQDAISDDKNNDCVQAGQAVLNLLNKDIKPRDIMTMKAFENAITVIIALGGSTNAVLHLIAMASAAEVNLKIDDFTRIGQKVPVIADLKPSGKYMMSELVKIGGTLPLMKMLLDAGLLHGDCLTVTGKTLAENLENVKPYADSQEIIRALDNPIKKDSHLRILRGNLATDGAVAKITGKEGLSFKGNAKCFSREEDALEAILNNQIITGDVIVIRYEGPVGGPGMREMLAPTSAVMGKGLGDKVALITDGRFSGGTHGFVVGHITPEAFEGGVLAVVKDGDEILIDAQNNVLELLVEQAIIDKRLYNWTQPKPNYTKGVLAKFAKLAKSASEGAVTD.

Residue cysteine 56 participates in [2Fe-2S] cluster binding. Mg(2+) is bound at residue aspartate 88. Cysteine 129 provides a ligand contact to [2Fe-2S] cluster. Mg(2+) is bound by residues aspartate 130 and lysine 131. The residue at position 131 (lysine 131) is an N6-carboxylysine. Cysteine 198 is a binding site for [2Fe-2S] cluster. Residue glutamate 449 participates in Mg(2+) binding. Serine 475 functions as the Proton acceptor in the catalytic mechanism.

The protein belongs to the IlvD/Edd family. As to quaternary structure, homodimer. [2Fe-2S] cluster serves as cofactor. It depends on Mg(2+) as a cofactor.

It carries out the reaction (2R)-2,3-dihydroxy-3-methylbutanoate = 3-methyl-2-oxobutanoate + H2O. The enzyme catalyses (2R,3R)-2,3-dihydroxy-3-methylpentanoate = (S)-3-methyl-2-oxopentanoate + H2O. The protein operates within amino-acid biosynthesis; L-isoleucine biosynthesis; L-isoleucine from 2-oxobutanoate: step 3/4. Its pathway is amino-acid biosynthesis; L-valine biosynthesis; L-valine from pyruvate: step 3/4. Its function is as follows. Functions in the biosynthesis of branched-chain amino acids. Catalyzes the dehydration of (2R,3R)-2,3-dihydroxy-3-methylpentanoate (2,3-dihydroxy-3-methylvalerate) into 2-oxo-3-methylpentanoate (2-oxo-3-methylvalerate) and of (2R)-2,3-dihydroxy-3-methylbutanoate (2,3-dihydroxyisovalerate) into 2-oxo-3-methylbutanoate (2-oxoisovalerate), the penultimate precursor to L-isoleucine and L-valine, respectively. In Ruthia magnifica subsp. Calyptogena magnifica, this protein is Dihydroxy-acid dehydratase.